The chain runs to 132 residues: Small ribosomal subunit protein uS8 (132 aa).

This sequence belongs to the universal ribosomal protein uS8 family. As to quaternary structure, part of the 30S ribosomal subunit. Contacts proteins S5 and S12.

One of the primary rRNA binding proteins, it binds directly to 16S rRNA central domain where it helps coordinate assembly of the platform of the 30S subunit. The chain is Small ribosomal subunit protein uS8 from Saccharopolyspora erythraea (strain ATCC 11635 / DSM 40517 / JCM 4748 / NBRC 13426 / NCIMB 8594 / NRRL 2338).